The chain runs to 620 residues: UvrABC system protein C (620 aa).

Positions 13–92 (DKPGVYIMKN…IKKYSPRYNI (80 aa)) constitute a GIY-YIG domain. One can recognise a UVR domain in the interval 204 to 239 (TSIIKKLKLEMEKAAEELEFEKAAKIRDRILAIELI).

The protein belongs to the UvrC family. In terms of assembly, interacts with UvrB in an incision complex.

The protein resides in the cytoplasm. In terms of biological role, the UvrABC repair system catalyzes the recognition and processing of DNA lesions. UvrC both incises the 5' and 3' sides of the lesion. The N-terminal half is responsible for the 3' incision and the C-terminal half is responsible for the 5' incision. The protein is UvrABC system protein C of Clostridium perfringens (strain ATCC 13124 / DSM 756 / JCM 1290 / NCIMB 6125 / NCTC 8237 / Type A).